The following is a 369-amino-acid chain: Endoglucanase (369 aa).

Residues 1-22 (MMTMLRGWITMIVMLTAINAQA) form the signal peptide. The active-site Proton donor is Glu56. Asp117 functions as the Nucleophile in the catalytic mechanism.

It belongs to the glycosyl hydrolase 8 (cellulase D) family.

Its subcellular location is the secreted. The catalysed reaction is Endohydrolysis of (1-&gt;4)-beta-D-glucosidic linkages in cellulose, lichenin and cereal beta-D-glucans.. It functions in the pathway glycan metabolism; bacterial cellulose biosynthesis. In terms of biological role, hydrolyzes carboxymethylcellulose. In Salmonella typhi, this protein is Endoglucanase (bcsZ).